Reading from the N-terminus, the 207-residue chain is LexA repressor (207 aa).

Residues 28 to 48 constitute a DNA-binding region (H-T-H motif); the sequence is VREIGEAVGLASSSTVHGHLA. Active-site for autocatalytic cleavage activity residues include serine 129 and lysine 167.

Belongs to the peptidase S24 family. In terms of assembly, homodimer.

The enzyme catalyses Hydrolysis of Ala-|-Gly bond in repressor LexA.. Represses a number of genes involved in the response to DNA damage (SOS response), including recA and lexA. In the presence of single-stranded DNA, RecA interacts with LexA causing an autocatalytic cleavage which disrupts the DNA-binding part of LexA, leading to derepression of the SOS regulon and eventually DNA repair. The protein is LexA repressor of Geobacillus sp. (strain WCH70).